Consider the following 1576-residue polypeptide: Proton channel OtopLc (1576 aa).

Disordered regions lie at residues 1–602 (MDSS…SSPP) and 621–736 (QIGS…SSPV). Low complexity-rich tracts occupy residues 58–67 (SLAEEVLLLV) and 76–85 (LLGQPLPTLT). 4 stretches are compositionally biased toward acidic residues: residues 103–116 (DEGD…EPVP), 159–171 (DDGE…DAEE), 186–198 (SNPD…EEQE), and 206–216 (PKEEDEEEDDD). Over residues 219-228 (TPPPPLPPLP) the composition is skewed to pro residues. Polar residues predominate over residues 229 to 241 (SNFSYVQGHNLGQ). Asn-230 is a glycosylation site (N-linked (GlcNAc...) asparagine). The segment covering 243 to 252 (TPPLTKSPSN) has biased composition (low complexity). Residues 253–264 (SPSPPVTPPPCP) are compositionally biased toward pro residues. An N-linked (GlcNAc...) asparagine glycan is attached at Asn-267. Positions 316-341 (DQPEPEDQPPEPENEPEPEPEPEPEP) are enriched in acidic residues. Residues 347 to 356 (AREDYSRSLD) show a composition bias toward basic and acidic residues. The segment covering 362–376 (TTITTPPSNGYSASS) has biased composition (polar residues). A compositionally biased stretch (basic and acidic residues) spans 384–393 (HFAELDEDRG). Positions 402–419 (QEPEEEVEEEEEEEEEEL) are enriched in acidic residues. A compositionally biased stretch (basic and acidic residues) spans 420 to 433 (TKETDEISVDRESL). Positions 434 to 457 (QDQGGDSISSPRPASILTGSISTS) are enriched in polar residues. Residues 465 to 507 (SPKPESRGPSRSGSQRSQLRSGSQQGSIAESRGGSRIGSRTGS) are compositionally biased toward low complexity. 2 stretches are compositionally biased toward polar residues: residues 519–534 (PQAS…SQGQ) and 545–555 (KSGSQRMQSPQ). The segment covering 563-575 (MPSPPLMRSPPPE) has biased composition (pro residues). Over residues 661-685 (AAAAPAVTTTAATTAVTSQPRSHFT) the composition is skewed to low complexity. The span at 686–709 (SSHHHYHLPHQFQHPHHQNHHTHS) shows a compositional bias: basic residues. Residues 741-761 (LFMAGVAPPIAAGAGSLMAMP) form a helical membrane-spanning segment. The interval 771-845 (GRVSARSGSQ…GSSSQPALSG (75 aa)) is disordered. A compositionally biased stretch (polar residues) spans 776–799 (RSGSQHHVTIDESSLPSHKGNIQE). The segment covering 826 to 839 (DSSDPPSSPGGSSS) has biased composition (low complexity). Transmembrane regions (helical) follow at residues 891-911 (ALAT…GIAF) and 931-951 (LYLY…LIWG). Residues 962 to 973 (PSKSATKASGTD) show a composition bias toward polar residues. The disordered stretch occupies residues 962-1001 (PSKSATKASGTDSMDESDTDSNSVHHRLPPPIPVRRPSLL). A run of 3 helical transmembrane segments spans residues 1019–1039 (GAVA…GQYF), 1051–1071 (LLAL…YFIF), and 1084–1104 (IIAR…WLNV). N-linked (GlcNAc...) asparagine glycosylation is present at Asn-1121. 7 helical membrane passes run 1179 to 1199 (FLFP…YVMW), 1239 to 1259 (FVGI…FVLI), 1272 to 1292 (VTIC…VGMI), 1310 to 1330 (ILLV…VIAG), 1340 to 1360 (LVPI…MFIL), 1381 to 1401 (IVTF…LEKS), and 1412 to 1432 (FYGL…AIFY). Asn-1479 carries N-linked (GlcNAc...) asparagine glycosylation. Residues 1498 to 1549 (EEVDSGESNSAEDAGAGAGSGGSRGSGGGAGAAEAGEAGEEGQQGGDSSCGL) form a disordered region. A compositionally biased stretch (low complexity) spans 1503 to 1512 (GESNSAEDAG). A compositionally biased stretch (gly residues) spans 1513 to 1528 (AGAGSGGSRGSGGGAG).

This sequence belongs to the otopetrin family.

The protein resides in the cell membrane. Proton-selective channel that specifically transports protons into cells. Proton-selective channel activity is probably required in cell types that use changes in intracellular pH for cell signaling or to regulate biochemical or developmental processes. The sequence is that of Proton channel OtopLc from Drosophila melanogaster (Fruit fly).